The sequence spans 318 residues: tRNA U34 carboxymethyltransferase (318 aa).

Residues lysine 88, tryptophan 102, lysine 107, glycine 126, methionine 192, tyrosine 196, and arginine 311 each contribute to the carboxy-S-adenosyl-L-methionine site.

Belongs to the class I-like SAM-binding methyltransferase superfamily. CmoB family. In terms of assembly, homotetramer.

The enzyme catalyses carboxy-S-adenosyl-L-methionine + 5-hydroxyuridine(34) in tRNA = 5-carboxymethoxyuridine(34) in tRNA + S-adenosyl-L-homocysteine + H(+). Functionally, catalyzes carboxymethyl transfer from carboxy-S-adenosyl-L-methionine (Cx-SAM) to 5-hydroxyuridine (ho5U) to form 5-carboxymethoxyuridine (cmo5U) at position 34 in tRNAs. The chain is tRNA U34 carboxymethyltransferase from Pseudomonas fluorescens (strain SBW25).